Consider the following 194-residue polypeptide: dCTP deaminase (194 aa).

DCTP is bound by residues 110–115 (RSSLAR), D128, 136–138 (VLE), Y171, K178, and Q182. Catalysis depends on E138, which acts as the Proton donor/acceptor. The interval 173 to 194 (SRQDAKYKNQQSAVASRINQDR) is disordered. Residues 180 to 194 (KNQQSAVASRINQDR) show a composition bias toward polar residues.

The protein belongs to the dCTP deaminase family. As to quaternary structure, homotrimer.

The enzyme catalyses dCTP + H2O + H(+) = dUTP + NH4(+). It participates in pyrimidine metabolism; dUMP biosynthesis; dUMP from dCTP (dUTP route): step 1/2. Its function is as follows. Catalyzes the deamination of dCTP to dUTP. The sequence is that of dCTP deaminase from Actinobacillus succinogenes (strain ATCC 55618 / DSM 22257 / CCUG 43843 / 130Z).